Consider the following 330-residue polypeptide: MKDTLALLQKFNAHPDSRCWYVAWNPKGTLLASCGGDRAIRIWGREGDSWECKTVLQDGHQRAVRKVAWSPCGNYLASASFDATTCIWKKKNDDFECLTVLEGHENEVKCVAWAPSGNQLATCSRDKSVWIWEVDEEDEYECVSVVNSHTQDVKHVVWHPTQELLASCSYDNNVCVYKEEDDDWECRATLEGHTSTVWGLTFDPSGQRLASCSDDRTVKIWKECQPGGGQDTAWKCVCTLSGFHGRTVYDIAWCPLTGALATACGDDGVRVFKEDETADPDQPVFSLSAHVPKAHSQDVNCIAWHPKEAGLLVSCSDNGEIAVWNYQSEV.

WD repeat units follow at residues 14–53, 59–98, 103–142, 148–187, 192–231, 243–282, and 294–330; these read HPDSRCWYVAWNPKGTLLASCGGDRAIRIWGREGDSWECK, GHQRAVRKVAWSPCGNYLASASFDATTCIWKKKNDDFECL, GHENEVKCVAWAPSGNQLATCSRDKSVWIWEVDEEDEYEC, SHTQDVKHVVWHPTQELLASCSYDNNVCVYKEEDDDWECR, GHTSTVWGLTFDPSGQRLASCSDDRTVKIWKECQPGGGQD, FHGRTVYDIAWCPLTGALATACGDDGVRVFKEDETADPDQ, and AHSQDVNCIAWHPKEAGLLVSCSDNGEIAVWNYQSEV.

It belongs to the WD repeat CIA1 family. In terms of assembly, component of the CIA complex.

Functionally, key component of the cytosolic iron-sulfur protein assembly (CIA) complex, a multiprotein complex that mediates the incorporation of iron-sulfur cluster into extramitochondrial Fe/S proteins. The protein is Probable cytosolic iron-sulfur protein assembly protein ciao1-A (ciao1a) of Salmo salar (Atlantic salmon).